A 203-amino-acid polypeptide reads, in one-letter code: ATP phosphoribosyltransferase (203 aa).

Belongs to the ATP phosphoribosyltransferase family. Short subfamily. In terms of assembly, heteromultimer composed of HisG and HisZ subunits.

The protein resides in the cytoplasm. The catalysed reaction is 1-(5-phospho-beta-D-ribosyl)-ATP + diphosphate = 5-phospho-alpha-D-ribose 1-diphosphate + ATP. It participates in amino-acid biosynthesis; L-histidine biosynthesis; L-histidine from 5-phospho-alpha-D-ribose 1-diphosphate: step 1/9. Functionally, catalyzes the condensation of ATP and 5-phosphoribose 1-diphosphate to form N'-(5'-phosphoribosyl)-ATP (PR-ATP). Has a crucial role in the pathway because the rate of histidine biosynthesis seems to be controlled primarily by regulation of HisG enzymatic activity. The protein is ATP phosphoribosyltransferase of Campylobacter fetus subsp. fetus (strain 82-40).